A 63-amino-acid polypeptide reads, in one-letter code: Hirudin (63 aa).

Residues 1-3 (VVY) are interaction with thrombin active site. Intrachain disulfides connect Cys-6/Cys-14, Cys-16/Cys-28, and Cys-22/Cys-39. Positions 39–63 (CVTGEGTPGPQSHNDGDFEEPEEYL) are disordered. Residue Thr-45 is glycosylated (O-linked (GalNAc...) threonine). An interaction with fibrinogen-binding exosite of thrombin region spans residues 55–63 (DFEEPEEYL). Position 62 is a sulfotyrosine (Tyr-62).

The protein belongs to the protease inhibitor I14 (hirudin) family.

The protein localises to the secreted. Its function is as follows. Hirudin is a potent thrombin-specific protease inhibitor. It forms a stable non-covalent complex with alpha-thrombin, thereby abolishing its ability to cleave fibrinogen. The chain is Hirudin from Poecilobdella viridis (Indian freshwater leech).